Consider the following 314-residue polypeptide: 2,3-dihydroxyphenylpropionate/2,3-dihydroxicinnamic acid 1,2-dioxygenase (314 aa).

His-115 functions as the Proton donor in the catalytic mechanism. The active-site Proton acceptor is His-179.

It belongs to the LigB/MhpB extradiol dioxygenase family. In terms of assembly, homotetramer. Fe(2+) is required as a cofactor.

The catalysed reaction is 3-(2,3-dihydroxyphenyl)propanoate + O2 = (2Z,4E)-2-hydroxy-6-oxonona-2,4-dienedioate + H(+). It catalyses the reaction (2E)-3-(2,3-dihydroxyphenyl)prop-2-enoate + O2 = (2Z,4E,7E)-2-hydroxy-6-oxonona-2,4,7-trienedioate + H(+). It participates in aromatic compound metabolism; 3-phenylpropanoate degradation. In terms of biological role, catalyzes the non-heme iron(II)-dependent oxidative cleavage of 2,3-dihydroxyphenylpropionic acid and 2,3-dihydroxicinnamic acid into 2-hydroxy-6-ketononadienedioate and 2-hydroxy-6-ketononatrienedioate, respectively. This is 2,3-dihydroxyphenylpropionate/2,3-dihydroxicinnamic acid 1,2-dioxygenase from Cupriavidus pinatubonensis (strain JMP 134 / LMG 1197) (Cupriavidus necator (strain JMP 134)).